The following is a 773-amino-acid chain: Protein FAM149A (773 aa).

Composition is skewed to low complexity over residues 18–37 (TSTA…AAAA) and 54–90 (LLRA…AAGA). 4 disordered regions span residues 18–155 (TSTA…RELG), 173–210 (DIGE…DSLP), 232–264 (FSSS…TERG), and 568–613 (TQNE…PWRL). The span at 174–186 (IGEEGASDGDSGD) shows a compositional bias: acidic residues. Residues 245 to 264 (TSWSGSATQSSTTGSSTERG) are compositionally biased toward low complexity.

This sequence belongs to the FAM149 family.

In Homo sapiens (Human), this protein is Protein FAM149A (FAM149A).